A 93-amino-acid polypeptide reads, in one-letter code: Parbolysin P3 (93 aa).

Disulfide bonds link Cys16/Cys37, Cys22/Cys33, and Cys47/Cys60.

This sequence belongs to the worm cytolysin family. As to expression, localized within the skin and proboscis and are most readily isolated from body mucus secretions.

Its subcellular location is the secreted. In terms of biological role, cytolysin that shows hemolytic activity (on bovine erythrocytes, HC(50)=5.75 mg/ml). This hemolytic activity is completely inhibited by small unilamelar vesicles composed of PC/PG, PC/PI and PC/PS in 1:1 molar ratios (with at least 100 mg/ml concentration). The sequence is that of Parbolysin P3 from Parborlasia corrugatus (Antarctic nemertean worm).